Consider the following 262-residue polypeptide: Small ribosomal subunit protein eS1 (262 aa).

Over residues 235 to 253 (HGDGKGSDEPGAKVSRPEA) the composition is skewed to basic and acidic residues. Residues 235-262 (HGDGKGSDEPGAKVSRPEAYEPPVQESV) form a disordered region.

The protein belongs to the eukaryotic ribosomal protein eS1 family. In terms of assembly, component of the small ribosomal subunit. Mature ribosomes consist of a small (40S) and a large (60S) subunit. The 40S subunit contains about 33 different proteins and 1 molecule of RNA (18S). The 60S subunit contains about 49 different proteins and 3 molecules of RNA (28S, 5.8S and 5S).

The protein localises to the cytoplasm. This chain is Small ribosomal subunit protein eS1, found in Triatoma infestans (Assassin bug).